Here is a 215-residue protein sequence, read N- to C-terminus: Cytochrome b6 (215 aa).

A helical membrane pass occupies residues 32–52 (LFYCLGGITLTCFLIQVATGF). Heme c is bound at residue Cys35. His86 and His100 together coordinate heme b. The next 3 helical transmembrane spans lie at 90 to 110 (ASMMVLMMVLHVFRVYLTGGF), 116 to 136 (STWVTGVIMASCTVSFGVTGY), and 186 to 206 (LHTFVLPLLTAVFMLGHFLMI). Heme b-binding residues include His187 and His202.

The protein belongs to the cytochrome b family. PetB subfamily. The 4 large subunits of the cytochrome b6-f complex are cytochrome b6, subunit IV (17 kDa polypeptide, PetD), cytochrome f and the Rieske protein, while the 4 small subunits are PetG, PetL, PetM and PetN. The complex functions as a dimer. Heme b is required as a cofactor. It depends on heme c as a cofactor.

It is found in the plastid. The protein localises to the chloroplast thylakoid membrane. Component of the cytochrome b6-f complex, which mediates electron transfer between photosystem II (PSII) and photosystem I (PSI), cyclic electron flow around PSI, and state transitions. In Bigelowiella natans (Pedinomonas minutissima), this protein is Cytochrome b6.